Here is a 335-residue protein sequence, read N- to C-terminus: uncharacterized protein (335 aa).

2 disordered regions span residues 152 to 179 (IQLP…TVND) and 252 to 271 (LDLF…SASL). A phosphoserine mark is found at serine 257 and serine 260. A compositionally biased stretch (polar residues) spans 257 to 271 (SPSSENKSTAGSASL).

This is an uncharacterized protein from Schizosaccharomyces pombe (strain 972 / ATCC 24843) (Fission yeast).